The primary structure comprises 548 residues: Glucose-6-phosphate isomerase 1 (548 aa).

The Proton donor role is filled by Glu-353. Catalysis depends on residues His-384 and Lys-495.

It belongs to the GPI family.

The protein resides in the cytoplasm. It catalyses the reaction alpha-D-glucose 6-phosphate = beta-D-fructose 6-phosphate. It participates in carbohydrate biosynthesis; gluconeogenesis. The protein operates within carbohydrate degradation; glycolysis; D-glyceraldehyde 3-phosphate and glycerone phosphate from D-glucose: step 2/4. Its function is as follows. Catalyzes the reversible isomerization of glucose-6-phosphate to fructose-6-phosphate. The protein is Glucose-6-phosphate isomerase 1 of Chromohalobacter salexigens (strain ATCC BAA-138 / DSM 3043 / CIP 106854 / NCIMB 13768 / 1H11).